We begin with the raw amino-acid sequence, 404 residues long: Probable tRNA sulfurtransferase (404 aa).

Residues 61–166 form the THUMP domain; that stretch reads EAVSERLKDV…SGYSYIMCDE (106 aa). Residues 184-185, 209-210, arginine 266, glycine 288, and glutamine 297 each bind ATP; these read LL and HF.

The protein belongs to the ThiI family.

It localises to the cytoplasm. The catalysed reaction is [ThiI sulfur-carrier protein]-S-sulfanyl-L-cysteine + a uridine in tRNA + 2 reduced [2Fe-2S]-[ferredoxin] + ATP + H(+) = [ThiI sulfur-carrier protein]-L-cysteine + a 4-thiouridine in tRNA + 2 oxidized [2Fe-2S]-[ferredoxin] + AMP + diphosphate. The enzyme catalyses [ThiS sulfur-carrier protein]-C-terminal Gly-Gly-AMP + S-sulfanyl-L-cysteinyl-[cysteine desulfurase] + AH2 = [ThiS sulfur-carrier protein]-C-terminal-Gly-aminoethanethioate + L-cysteinyl-[cysteine desulfurase] + A + AMP + 2 H(+). It participates in cofactor biosynthesis; thiamine diphosphate biosynthesis. Its function is as follows. Catalyzes the ATP-dependent transfer of a sulfur to tRNA to produce 4-thiouridine in position 8 of tRNAs, which functions as a near-UV photosensor. Also catalyzes the transfer of sulfur to the sulfur carrier protein ThiS, forming ThiS-thiocarboxylate. This is a step in the synthesis of thiazole, in the thiamine biosynthesis pathway. The sulfur is donated as persulfide by IscS. This Bacillus cereus (strain AH820) protein is Probable tRNA sulfurtransferase.